Consider the following 316-residue polypeptide: Adenine deaminase (316 aa).

Residues His-14, His-16, and His-194 each coordinate Zn(2+). The active-site Proton donor is the Glu-197. Asp-275 lines the Zn(2+) pocket. Asp-276 is a binding site for substrate.

The protein belongs to the metallo-dependent hydrolases superfamily. Adenosine and AMP deaminases family. Adenine deaminase type 2 subfamily. Zn(2+) is required as a cofactor.

It catalyses the reaction adenine + H2O + H(+) = hypoxanthine + NH4(+). Catalyzes the hydrolytic deamination of adenine to hypoxanthine. Plays an important role in the purine salvage pathway and in nitrogen catabolism. The chain is Adenine deaminase from Pseudomonas paraeruginosa (strain DSM 24068 / PA7) (Pseudomonas aeruginosa (strain PA7)).